Reading from the N-terminus, the 204-residue chain is Protein GrpE (204 aa).

Basic and acidic residues-rich tracts occupy residues Met1 to Gly21 and Glu36 to Lys46. Residues Met1–Lys46 form a disordered region.

The protein belongs to the GrpE family. Homodimer.

The protein resides in the cytoplasm. Functionally, participates actively in the response to hyperosmotic and heat shock by preventing the aggregation of stress-denatured proteins, in association with DnaK and GrpE. It is the nucleotide exchange factor for DnaK and may function as a thermosensor. Unfolded proteins bind initially to DnaJ; upon interaction with the DnaJ-bound protein, DnaK hydrolyzes its bound ATP, resulting in the formation of a stable complex. GrpE releases ADP from DnaK; ATP binding to DnaK triggers the release of the substrate protein, thus completing the reaction cycle. Several rounds of ATP-dependent interactions between DnaJ, DnaK and GrpE are required for fully efficient folding. This Caldanaerobacter subterraneus subsp. tengcongensis (strain DSM 15242 / JCM 11007 / NBRC 100824 / MB4) (Thermoanaerobacter tengcongensis) protein is Protein GrpE.